The chain runs to 201 residues: Probable GTP-binding protein EngB (201 aa).

An EngB-type G domain is found at 21–191 (AAPQIILAGR…WNLLDVTAIP (171 aa)). GTP is bound by residues 29 to 36 (GRSNVGKS), 56 to 60 (GKTRS), 75 to 78 (DLPG), 142 to 145 (TKSD), and 168 to 172 (ICVSS). Residues serine 36 and threonine 58 each coordinate Mg(2+).

It belongs to the TRAFAC class TrmE-Era-EngA-EngB-Septin-like GTPase superfamily. EngB GTPase family. Mg(2+) serves as cofactor.

Its function is as follows. Necessary for normal cell division and for the maintenance of normal septation. This is Probable GTP-binding protein EngB from Maridesulfovibrio salexigens (strain ATCC 14822 / DSM 2638 / NCIMB 8403 / VKM B-1763) (Desulfovibrio salexigens).